Here is an 829-residue protein sequence, read N- to C-terminus: DNA ligase (829 aa).

The interval 1-23 is disordered; that stretch reads MPAQTSRARPVEEMTAAQAREAH. Residues 47-51, 96-97, and E130 contribute to the NAD(+) site; these read DAEYD and SL. K132 acts as the N6-AMP-lysine intermediate in catalysis. The NAD(+) site is built by R153, E190, K306, and K330. Residues C453, C456, C477, and C483 each contribute to the Zn(2+) site. The BRCT domain maps to 750 to 829; that stretch reads AAAAVFSGQT…AEWLAMVEAA (80 aa).

Belongs to the NAD-dependent DNA ligase family. LigA subfamily. Requires Mg(2+) as cofactor. Mn(2+) is required as a cofactor.

The catalysed reaction is NAD(+) + (deoxyribonucleotide)n-3'-hydroxyl + 5'-phospho-(deoxyribonucleotide)m = (deoxyribonucleotide)n+m + AMP + beta-nicotinamide D-nucleotide.. Functionally, DNA ligase that catalyzes the formation of phosphodiester linkages between 5'-phosphoryl and 3'-hydroxyl groups in double-stranded DNA using NAD as a coenzyme and as the energy source for the reaction. It is essential for DNA replication and repair of damaged DNA. The sequence is that of DNA ligase from Methylobacterium nodulans (strain LMG 21967 / CNCM I-2342 / ORS 2060).